A 147-amino-acid chain; its full sequence is Sentan (147 aa).

Residues 1 to 32 (MGGCMHSTQDKSLHLEGDPNPSAAPTSTCAPR) form a disordered region. The span at 8–17 (TQDKSLHLEG) shows a compositional bias: basic and acidic residues.

The protein belongs to the S-100 family.

The protein resides in the cell projection. It localises to the cilium. Functionally, may be a component of the linker structure that bridges the ciliary membrane and peripheral singlet microtubules. The protein is Sentan (SNTN) of Homo sapiens (Human).